Consider the following 734-residue polypeptide: Photosystem I P700 chlorophyll a apoprotein A2 (734 aa).

8 helical membrane-spanning segments follow: residues 46-69, 135-158, 175-199, 273-291, 330-353, 369-395, 417-439, and 517-535; these read IFAS…FHVA, LYNG…LHLE, LNHH…HVAI, IAHH…GHMY, LHFQ…QHMY, AALY…IFFI, AIIS…LYVH, and FLVH…LILV. Cysteine 559 and cysteine 568 together coordinate [4Fe-4S] cluster. Transmembrane regions (helical) follow at residues 575–596 and 643–665; these read AFYL…YWHW and LAVW…MFLI. Chlorophyll a-binding residues include histidine 654, methionine 662, and tyrosine 670. Position 671 (tryptophan 671) interacts with phylloquinone. Residues 707-727 form a helical membrane-spanning segment; the sequence is LVGLAHFSVGYVFTYAAFLIA.

The protein belongs to the PsaA/PsaB family. As to quaternary structure, the PsaA/B heterodimer binds the P700 chlorophyll special pair and subsequent electron acceptors. PSI consists of a core antenna complex that captures photons, and an electron transfer chain that converts photonic excitation into a charge separation. The eukaryotic PSI reaction center is composed of at least 11 subunits. Requires P700 is a chlorophyll a/chlorophyll a' dimer, A0 is one or more chlorophyll a, A1 is one or both phylloquinones and FX is a shared 4Fe-4S iron-sulfur center. as cofactor.

The protein localises to the plastid. It localises to the chloroplast thylakoid membrane. It catalyses the reaction reduced [plastocyanin] + hnu + oxidized [2Fe-2S]-[ferredoxin] = oxidized [plastocyanin] + reduced [2Fe-2S]-[ferredoxin]. Functionally, psaA and PsaB bind P700, the primary electron donor of photosystem I (PSI), as well as the electron acceptors A0, A1 and FX. PSI is a plastocyanin/cytochrome c6-ferredoxin oxidoreductase, converting photonic excitation into a charge separation, which transfers an electron from the donor P700 chlorophyll pair to the spectroscopically characterized acceptors A0, A1, FX, FA and FB in turn. Oxidized P700 is reduced on the lumenal side of the thylakoid membrane by plastocyanin or cytochrome c6. The polypeptide is Photosystem I P700 chlorophyll a apoprotein A2 (Euglena gracilis).